Here is a 255-residue protein sequence, read N- to C-terminus: 5'-nucleotidase SurE (255 aa).

Residues D13, D14, S44, and N100 each coordinate a divalent metal cation.

This sequence belongs to the SurE nucleotidase family. The cofactor is a divalent metal cation.

The protein localises to the cytoplasm. It catalyses the reaction a ribonucleoside 5'-phosphate + H2O = a ribonucleoside + phosphate. In terms of biological role, nucleotidase that shows phosphatase activity on nucleoside 5'-monophosphates. In Bacteroides fragilis (strain ATCC 25285 / DSM 2151 / CCUG 4856 / JCM 11019 / LMG 10263 / NCTC 9343 / Onslow / VPI 2553 / EN-2), this protein is 5'-nucleotidase SurE.